Consider the following 128-residue polypeptide: NADH-quinone oxidoreductase subunit A (128 aa).

The next 3 helical transmembrane spans lie at 5-25, 72-92, and 100-120; these read IPIL…VVIA, LTAM…PWAV, and FALV…AYVW.

This sequence belongs to the complex I subunit 3 family. NDH-1 is composed of 14 different subunits. Subunits NuoA, H, J, K, L, M, N constitute the membrane sector of the complex.

The protein resides in the cell membrane. The enzyme catalyses a quinone + NADH + 5 H(+)(in) = a quinol + NAD(+) + 4 H(+)(out). In terms of biological role, NDH-1 shuttles electrons from NADH, via FMN and iron-sulfur (Fe-S) centers, to quinones in the respiratory chain. The immediate electron acceptor for the enzyme in this species is believed to be a menaquinone. Couples the redox reaction to proton translocation (for every two electrons transferred, four hydrogen ions are translocated across the cytoplasmic membrane), and thus conserves the redox energy in a proton gradient. The chain is NADH-quinone oxidoreductase subunit A from Mycobacterium bovis (strain ATCC BAA-935 / AF2122/97).